The chain runs to 221 residues: MSSVFLFISNESGKAIFLISGDVLVKSFCSLSDTCPFQDSCRSCSLLNAAKNYLAGTAPDSRIKTLDGELSAGIGEYKIGKNVLLKVMGLGSCIGVILSDVSTGICGIAHVLLPGASDRGETKYAETAIEKMVEDMVKMGARRSRITAKFAGGAQVFKHMSLDILKIGDRNAISVEETLIKKNIPILAKDVGGEVGRNVIFNPADGSMIVKYTAKGEVLWL.

This sequence belongs to the CheD family.

The enzyme catalyses L-glutaminyl-[protein] + H2O = L-glutamyl-[protein] + NH4(+). In terms of biological role, probably deamidates glutamine residues to glutamate on methyl-accepting chemotaxis receptors (MCPs), playing an important role in chemotaxis. The chain is Probable chemoreceptor glutamine deamidase CheD 1 from Methanosarcina mazei (strain ATCC BAA-159 / DSM 3647 / Goe1 / Go1 / JCM 11833 / OCM 88) (Methanosarcina frisia).